The chain runs to 310 residues: uncharacterized protein (310 aa).

Residues methionine 1 to alanine 6 lie on the Cytoplasmic side of the membrane. The 65-residue stretch at lysine 5–glutamine 69 folds into the PQ-loop 1 domain. Residues alanine 7 to isoleucine 27 form a helical membrane-spanning segment. Over tyrosine 28–threonine 36 the chain is Extracellular. The chain crosses the membrane as a helical span at residues glycine 37–phenylalanine 57. Residues cysteine 58 to lysine 61 are Cytoplasmic-facing. The helical transmembrane segment at glycine 62–valine 82 threads the bilayer. The Extracellular segment spans residues glutamine 83 to lysine 96. A helical transmembrane segment spans residues isoleucine 97–leucine 117. The Cytoplasmic portion of the chain corresponds to tryptophan 118–aspartate 131. A helical transmembrane segment spans residues leucine 132–glutamate 152. Residues alanine 138–leucine 194 form the PQ-loop 2 domain. At leucine 153–asparagine 164 the chain is on the extracellular side. A helical transmembrane segment spans residues phenylalanine 165–glycine 185. The Cytoplasmic portion of the chain corresponds to asparagine 186–glycine 191. A helical transmembrane segment spans residues isoleucine 192–tryptophan 212. Topologically, residues tryptophan 213–valine 310 are extracellular. Serine 229 carries the phosphoserine modification. Residues asparagine 251 and asparagine 259 are each glycosylated (N-linked (GlcNAc...) asparagine).

Its subcellular location is the cell membrane. This is an uncharacterized protein from Saccharomyces cerevisiae (strain ATCC 204508 / S288c) (Baker's yeast).